A 202-amino-acid polypeptide reads, in one-letter code: Uclacyanin-2 (202 aa).

The signal sequence occupies residues 1 to 29 (MAMNGLSKMAVAAATALLLVLTIVPGAVA). The Phytocyanin domain occupies 30–126 (VTYTIEWTTG…GMKLAVNVVA (97 aa)). Residue His65 participates in Cu cation binding. The N-linked (GlcNAc...) asparagine glycan is linked to Asn86. Cu cation-binding residues include Cys106, His111, and Met118. The segment at 129-181 (AGPPATPTPPSSTPGTPTTPESPPSGGSPTPTTPTPGAGSTSPPPPPKASGAS) is disordered. Residues 141–169 (TPGTPTTPESPPSGGSPTPTTPTPGAGST) are compositionally biased toward low complexity. Ser178 carries the GPI-anchor amidated serine lipid modification. The propeptide at 179 to 202 (GASKGVMSYVLVGVSMVLGYGLWM) is removed in mature form.

The protein resides in the cell membrane. Its function is as follows. Probably acts as an electron carrier involved in oxygen activation and/or lignin formation. This chain is Uclacyanin-2, found in Arabidopsis thaliana (Mouse-ear cress).